The sequence spans 252 residues: Ribosomal RNA small subunit methyltransferase J (252 aa).

S-adenosyl-L-methionine contacts are provided by residues 101–102, 117–118, 153–154, and Asp-171; these read RD, ER, and SS.

The protein belongs to the methyltransferase superfamily. RsmJ family.

The protein localises to the cytoplasm. It carries out the reaction guanosine(1516) in 16S rRNA + S-adenosyl-L-methionine = N(2)-methylguanosine(1516) in 16S rRNA + S-adenosyl-L-homocysteine + H(+). Functionally, specifically methylates the guanosine in position 1516 of 16S rRNA. The chain is Ribosomal RNA small subunit methyltransferase J from Salmonella paratyphi B (strain ATCC BAA-1250 / SPB7).